The following is a 646-amino-acid chain: Centrosomal protein of 72 kDa (646 aa).

3 LRR repeats span residues 28–49 (ELRS…GNSL), 54–75 (ALKS…QYLV), and 76–97 (SLES…FRLH). The LRRCT domain maps to 110-149 (NPVVKNESDYRLFVVHMLPKLRQLDDRPVRESERKASQLH). Phosphoserine is present on residues serine 117 and serine 236. 2 disordered regions span residues 300–342 (SVDV…RFQV) and 357–399 (GPSS…SDPR). The span at 307-319 (ASSAQKSSLSSQK) shows a compositional bias: low complexity. Serine 380 is modified (phosphoserine). Basic and acidic residues predominate over residues 383–392 (EALEAEERTS). Serine 402 is subject to Phosphoserine. A coiled-coil region spans residues 476–622 (LSLENKTLQS…RAEVEQMRWS (147 aa)).

Belongs to the CEP72 family. As to quaternary structure, interacts with KIZ, PCM1 and CDK5RAP2.

The protein resides in the cytoplasm. It localises to the cytoskeleton. It is found in the microtubule organizing center. The protein localises to the centrosome. Its subcellular location is the centriolar satellite. In terms of biological role, involved in the recruitment of key centrosomal proteins to the centrosome. Provides centrosomal microtubule-nucleation activity on the gamma-tubulin ring complexes (gamma-TuRCs) and has critical roles in forming a focused bipolar spindle, which is needed for proper tension generation between sister chromatids. Required for localization of KIZ, AKAP9 and gamma-tubulin ring complexes (gamma-TuRCs). Involved in centriole duplication. Required for CDK5RAP22, CEP152, WDR62 and CEP63 centrosomal localization and promotes the centrosomal localization of CDK2. In Mus musculus (Mouse), this protein is Centrosomal protein of 72 kDa (Cep72).